The chain runs to 229 residues: Ribonuclease 3 (229 aa).

The RNase III domain maps to 5–127 (LARLERKLGY…LIGAIYLDAD (123 aa)). Residue E40 coordinates Mg(2+). The active site involves D44. D113 and E116 together coordinate Mg(2+). Residue E116 is part of the active site. The region spanning 154–224 (DPKTRLQEFL…AASALIALGV (71 aa)) is the DRBM domain.

It belongs to the ribonuclease III family. In terms of assembly, homodimer. It depends on Mg(2+) as a cofactor.

The protein localises to the cytoplasm. The enzyme catalyses Endonucleolytic cleavage to 5'-phosphomonoester.. Functionally, digests double-stranded RNA. Involved in the processing of primary rRNA transcript to yield the immediate precursors to the large and small rRNAs (23S and 16S). Processes some mRNAs, and tRNAs when they are encoded in the rRNA operon. Processes pre-crRNA and tracrRNA of type II CRISPR loci if present in the organism. In Pseudomonas putida (strain GB-1), this protein is Ribonuclease 3.